The sequence spans 350 residues: MSREANPFKKMPTILMPDELMAKALRRGEKVANEMRQKELPWLLKARFVEEHKVRTIASVVADNLQKVIDKTPPVRKLPKFYQEMVEVLVGIDDFKKSMGAFKWASELVRKLGNEYARKIRKARTPQQAGKLRKEFVGRVKSILEQIHPEMAFVAVAREKLKDLPTFKDLPTVVIAGYPNVGKSTLLKKLTGADVEINSYPFTTKGINVGYIGEIQMVDTPGLLDRPLYERNDIELQAILALNYLANLILFIIDASEFCGYTIEEQINLLKEIKDLFKAPIVVAINKIDLVDEERVKEIEEKLKEVGIEEILKISADKDIGLDELKERLKKIAIKEFLKDKDAENKELEC.

Residues 171–334 (PTVVIAGYPN…LKERLKKIAI (164 aa)) enclose the OBG-type G domain. GTP is bound by residues 177 to 184 (GYPNVGKS), 219 to 223 (DTPGL), and 286 to 289 (NKID).

It belongs to the TRAFAC class OBG-HflX-like GTPase superfamily. OBG GTPase family. NOG subfamily.

This is an uncharacterized protein from Methanocaldococcus jannaschii (strain ATCC 43067 / DSM 2661 / JAL-1 / JCM 10045 / NBRC 100440) (Methanococcus jannaschii).